Here is a 155-residue protein sequence, read N- to C-terminus: D-aminoacyl-tRNA deacylase (155 aa).

The short motif at 137-138 (GP) is the Gly-cisPro motif, important for rejection of L-amino acids element.

This sequence belongs to the DTD family. In terms of assembly, homodimer.

It localises to the cytoplasm. It carries out the reaction glycyl-tRNA(Ala) + H2O = tRNA(Ala) + glycine + H(+). It catalyses the reaction a D-aminoacyl-tRNA + H2O = a tRNA + a D-alpha-amino acid + H(+). In terms of biological role, an aminoacyl-tRNA editing enzyme that deacylates mischarged D-aminoacyl-tRNAs. Also deacylates mischarged glycyl-tRNA(Ala), protecting cells against glycine mischarging by AlaRS. Acts via tRNA-based rather than protein-based catalysis; rejects L-amino acids rather than detecting D-amino acids in the active site. By recycling D-aminoacyl-tRNA to D-amino acids and free tRNA molecules, this enzyme counteracts the toxicity associated with the formation of D-aminoacyl-tRNA entities in vivo and helps enforce protein L-homochirality. The chain is D-aminoacyl-tRNA deacylase from Nitrosococcus oceani (strain ATCC 19707 / BCRC 17464 / JCM 30415 / NCIMB 11848 / C-107).